Here is a 344-residue protein sequence, read N- to C-terminus: Phosphate acyltransferase (344 aa).

Belongs to the PlsX family. In terms of assembly, homodimer. Probably interacts with PlsY.

The protein resides in the cytoplasm. It carries out the reaction a fatty acyl-[ACP] + phosphate = an acyl phosphate + holo-[ACP]. Its pathway is lipid metabolism; phospholipid metabolism. Functionally, catalyzes the reversible formation of acyl-phosphate (acyl-PO(4)) from acyl-[acyl-carrier-protein] (acyl-ACP). This enzyme utilizes acyl-ACP as fatty acyl donor, but not acyl-CoA. The protein is Phosphate acyltransferase of Yersinia enterocolitica serotype O:8 / biotype 1B (strain NCTC 13174 / 8081).